A 207-amino-acid polypeptide reads, in one-letter code: Large ribosomal subunit protein uL4 (207 aa).

Positions 55–75 (SAVRGGGRKPWRQKGTGRARQ) are disordered. Residues 60 to 71 (GGRKPWRQKGTG) show a composition bias toward basic residues.

It belongs to the universal ribosomal protein uL4 family. In terms of assembly, part of the 50S ribosomal subunit.

In terms of biological role, one of the primary rRNA binding proteins, this protein initially binds near the 5'-end of the 23S rRNA. It is important during the early stages of 50S assembly. It makes multiple contacts with different domains of the 23S rRNA in the assembled 50S subunit and ribosome. Forms part of the polypeptide exit tunnel. The polypeptide is Large ribosomal subunit protein uL4 (Staphylococcus epidermidis (strain ATCC 35984 / DSM 28319 / BCRC 17069 / CCUG 31568 / BM 3577 / RP62A)).